The chain runs to 120 residues: MARIAGVDIPRDKRVVISLTYIYGIGKPTAQILKEAGVSEDTRVRDLTEEELGRIREIVGRLKVEGDLRREVSLNIKRLMEIGCYRGLRHRRGLPVRGQNTKNNARTRKGPRRTVANKKK.

Residues 93–120 are disordered; sequence GLPVRGQNTKNNARTRKGPRRTVANKKK. Positions 105–120 are enriched in basic residues; that stretch reads ARTRKGPRRTVANKKK.

This sequence belongs to the universal ribosomal protein uS13 family. In terms of assembly, part of the 30S ribosomal subunit. Has been shown to cross-link to S19 forming a loose heterodimer. Forms two bridges to the 50S subunit in the 70S ribosome.

Located at the top of the head of the 30S subunit, it contacts several helices of the 16S rRNA. In the 70S ribosome it contacts the 23S rRNA (bridge B1a) and protein L5 of the 50S subunit (bridge B1b), connecting the 2 subunits; these bridges are implicated in subunit movement. Contacts the tRNA in the A and P-sites. The chain is Small ribosomal subunit protein uS13 (rpsM) from Geobacillus stearothermophilus (Bacillus stearothermophilus).